The chain runs to 304 residues: bZIP transcription factor 50 (304 aa).

Residues 1–222 (MDVEFFADLD…MQESAVLTET (222 aa)) are Cytoplasmic-facing. 2 disordered regions span residues 26 to 60 (GSGV…SREA) and 94 to 163 (GEEE…ERKK). Over residues 45–59 (SPESVSSRRPSPSRE) the composition is skewed to low complexity. Over residues 127–139 (EKEDVEAEVDGDD) the composition is skewed to acidic residues. The region spanning 141-203 (MSKKKRRQMR…NMALRQSLLK (63 aa)) is the bZIP domain. The tract at residues 143 to 167 (KKKRRQMRNRDSAMKSRERKKMYVK) is basic motif. Residues 150 to 163 (RNRDSAMKSRERKK) are compositionally biased toward basic and acidic residues. Residues 169–183 (LETKSKYLEAECRRL) are leucine-zipper. Residues 223 to 243 (LPLVSLLWLVSIVCLLPVPGL) traverse the membrane as a helical segment. At 244–304 (PNRNPVARSS…GPFRLAAAAC (61 aa)) the chain is on the lumenal side.

Belongs to the bZIP family.

The protein localises to the endoplasmic reticulum membrane. Its subcellular location is the nucleus. Transcriptionally activated by IRE1 in response to endoplasmic reticulum (ER) stress. IRE1 cleaves a 20-bp fragment causing a frameshift of the mRNA transcript, leading to a nuclear isoform of the BZIP50 activator. Functionally, transcription factor involved in endoplasmic reticulum (ER) stress response. Acts downstream of the ER stress sensors IRE1, BZIP39 and BZIP60 to activate BiP chaperone genes. This chain is bZIP transcription factor 50, found in Oryza sativa subsp. japonica (Rice).